Reading from the N-terminus, the 503-residue chain is V-type proton ATPase subunit B (503 aa).

An ATP-binding site is contributed by arginine 378. Phosphoserine is present on residues serine 491, serine 492, serine 502, and serine 503.

It belongs to the ATPase alpha/beta chains family. As to quaternary structure, V-ATPase is a heteromultimeric enzyme composed of a peripheral catalytic V1 complex (components A to H) attached to an integral membrane V0 proton pore complex (components: a, c, c', c'', d, e, f and VOA1). Interacts with rav1.

The protein resides in the vacuole membrane. Non-catalytic subunit of the V1 complex of vacuolar(H+)-ATPase (V-ATPase), a multisubunit enzyme composed of a peripheral complex (V1) that hydrolyzes ATP and a membrane integral complex (V0) that translocates protons. V-ATPase is responsible for acidifying and maintaining the pH of intracellular compartments. This chain is V-type proton ATPase subunit B, found in Schizosaccharomyces pombe (strain 972 / ATCC 24843) (Fission yeast).